Consider the following 1859-residue polypeptide: Y' element ATP-dependent helicase protein 1 copy 6 (1859 aa).

A Helicase ATP-binding domain is found at glutamate 861–alanine 1038. Alanine 874–threonine 881 is an ATP binding site. In terms of domain architecture, Helicase C-terminal spans lysine 1095 to glycine 1244. The span at alanine 1318–serine 1461 shows a compositional bias: low complexity. Residues alanine 1318–lysine 1485 are disordered. The span at alanine 1462–lysine 1485 shows a compositional bias: basic and acidic residues.

Belongs to the helicase family. Yeast subtelomeric Y' repeat subfamily.

Functionally, catalyzes DNA unwinding and is involved in telomerase-independent telomere maintenance. The sequence is that of Y' element ATP-dependent helicase protein 1 copy 6 (YRF1-6) from Saccharomyces cerevisiae (strain ATCC 204508 / S288c) (Baker's yeast).